The chain runs to 281 residues: 39kDa core protein OPG130 (281 aa).

Residues 1-22 (MDFFNKFSQGLAESSTPKSSIY) are compositionally biased toward polar residues. Disordered stretches follow at residues 1–33 (MDFF…DTKK), 91–112 (ILLP…TSSD), and 149–192 (NKDQ…PQPP). The segment covering 24 to 33 (SEEKDPDTKK) has biased composition (basic and acidic residues). Residues 94–112 (PSSTAPTPKPRQQTNTSSD) show a composition bias toward polar residues. Residues 154 to 175 (TTTPPSTQPSQTLPTTTCTQQS) show a composition bias toward low complexity.

This sequence belongs to the orthopoxvirus OPG130 family. Interacts with OPG136 and its cleaved form. In terms of processing, its phosphorylation state is regulated by the OPG054 kinase and the OPG106 phosphatase.

It is found in the virion. The protein resides in the host endoplasmic reticulum-Golgi intermediate compartment membrane. Functionally, component of the virion core. Participates in virion assembly. In Vaccinia virus (strain Copenhagen) (VACV), this protein is 39kDa core protein OPG130 (OPG130).